A 628-amino-acid polypeptide reads, in one-letter code: Rac GTPase-activating protein 1 (628 aa).

An N-acetylmethionine modification is found at M1. Positions Q33–C110 form a coiled coil. The tract at residues I107–R286 is interaction with SLC26A8. Phosphoserine; by PLK1 is present on S150. Position 155 is a phosphoserine (S155). At S158 the chain carries Phosphoserine; by PLK1. Position 162 is a phosphothreonine (T162). S165 and S171 each carry phosphoserine; by PLK1. A disordered region spans residues K179–K201. A phosphoserine mark is found at S204, S207, and S215. The interval S242 to G284 is disordered. Residue K249 forms a Glycyl lysine isopeptide (Lys-Gly) (interchain with G-Cter in SUMO2) linkage. S258 carries the phosphoserine modification. Over residues D274 to G283 the composition is skewed to polar residues. The segment at L287–C336 adopts a Phorbol-ester/DAG-type zinc-finger fold. At T343 the chain carries Phosphothreonine. Positions G350 to W540 constitute a Rho-GAP domain. The residue at position 388 (S388) is a Phosphoserine; by AURKB. K405 is covalently cross-linked (Glycyl lysine isopeptide (Lys-Gly) (interchain with G-Cter in SUMO2)). S411 carries the phosphoserine; by AURKB modification. T564, T577, T585, and T602 each carry phosphothreonine.

In terms of assembly, heterotetramer of two molecules each of RACGAP1 and KIF23. Found in the centralspindlin complex. Associates with alpha-, beta- and gamma-tubulin and microtubules. Interacts via its Rho-GAP domain with RND2. Associates with AURKB during M phase. Interacts via its Rho-GAP domain and basic region with PRC1. The interaction with PRC1 inhibits its GAP activity towards CDC42 in vitro, which may be required for maintaining normal spindle morphology. Interacts with SLC26A8 via its N-terminus. Interacts with ECT2; the interaction is direct, occurs at anaphase and during cytokinesis in a microtubule-dependent manner, is enhanced by phosphorylation by PLK1 and phosphorylation at Ser-165 plays a major role in mediating binding. Interacts with RAB11FIP3; the interaction occurs at late telophase. Interacts with KIF23; the interaction is direct. Post-translationally, phosphorylated at multiple sites in the midbody during cytokinesis. Phosphorylation by AURKB on Ser-388 at the midbody is, at least in part, responsible for exerting its latent GAP activity towards RhoA. Phosphorylation on multiple serine residues by PLK1 enhances its association with ECT2 and is critical for cleavage furrow formation. Phosphorylation on Ser-165 plays a major role in mediating interaction with ECT2. Phosphorylation on Ser-158 does not appear to contribute to binding to ECT2. Highly expressed in testis, thymus and spleen and weakly expressed in brain, heart, skeletal muscle and kidney. In testis, expression is restricted to germ cells with the highest levels of expression found in spermatocytes. Not detected in adult liver. Also expressed in fetal liver and in several hematopoietic cell lines.

Its subcellular location is the nucleus. It is found in the cytoplasm. The protein localises to the cytoskeleton. It localises to the spindle. The protein resides in the cytoplasmic vesicle. Its subcellular location is the secretory vesicle. It is found in the acrosome. The protein localises to the cleavage furrow. It localises to the midbody. The protein resides in the midbody ring. Its subcellular location is the cell membrane. Component of the centralspindlin complex that serves as a microtubule-dependent and Rho-mediated signaling required for the myosin contractile ring formation during the cell cycle cytokinesis. Required for proper attachment of the midbody to the cell membrane during cytokinesis. Sequentially binds to ECT2 and RAB11FIP3 which regulates cleavage furrow ingression and abscission during cytokinesis. Plays key roles in controlling cell growth and differentiation of hematopoietic cells through mechanisms other than regulating Rac GTPase activity. Has a critical role in erythropoiesis. Also involved in the regulation of growth-related processes in adipocytes and myoblasts. May be involved in regulating spermatogenesis and in the RACGAP1 pathway in neuronal proliferation. Shows strong GAP (GTPase activation) activity towards CDC42 and RAC1 and less towards RHOA. Essential for the early stages of embryogenesis. May play a role in regulating cortical activity through RHOA during cytokinesis. May participate in the regulation of sulfate transport in male germ cells. In Mus musculus (Mouse), this protein is Rac GTPase-activating protein 1.